A 1339-amino-acid polypeptide reads, in one-letter code: DNA polymerase alpha catalytic subunit (1339 aa).

Disordered stretches follow at residues 1–90 (MSGG…SMSD) and 177–203 (NVER…GYRN). A compositionally biased stretch (basic and acidic residues) spans 27–36 (DQWRSLREEV). Over residues 79-89 (PKQQTLAQSMS) the composition is skewed to polar residues. The Zn(2+) site is built by C1179, C1182, C1213, C1216, C1233, C1243, C1271, and C1286. Residues 1179-1216 (CTHCRLMTPINPHTRVMEVLADQERQRDRFDLYVCVSC) form a CysA-type zinc finger. Positions 1243 to 1271 (CGSAAAVKAVRTQFTYYRALFDVPHAPGC) match the CysB motif motif.

This sequence belongs to the DNA polymerase type-B family.

Its subcellular location is the nucleus. It carries out the reaction DNA(n) + a 2'-deoxyribonucleoside 5'-triphosphate = DNA(n+1) + diphosphate. Functionally, polymerase alpha in a complex with DNA primase is a replicative polymerase. This chain is DNA polymerase alpha catalytic subunit, found in Leishmania donovani.